The sequence spans 209 residues: Large ribosomal subunit protein uL3 (209 aa).

The segment at 113-155 (TSRGHGYQGNIKRHHQSRGPETHGSRYHRIPGSMGSIINRVPK) is disordered.

Belongs to the universal ribosomal protein uL3 family. As to quaternary structure, part of the 50S ribosomal subunit. Forms a cluster with proteins L14 and L19.

Functionally, one of the primary rRNA binding proteins, it binds directly near the 3'-end of the 23S rRNA, where it nucleates assembly of the 50S subunit. This is Large ribosomal subunit protein uL3 from Lactobacillus delbrueckii subsp. bulgaricus (strain ATCC 11842 / DSM 20081 / BCRC 10696 / JCM 1002 / NBRC 13953 / NCIMB 11778 / NCTC 12712 / WDCM 00102 / Lb 14).